Consider the following 504-residue polypeptide: Glutamate--tRNA ligase (504 aa).

A 'HIGH' region motif is present at residues 27–37 (PSPTGTPHVGL). Residues 271–275 (KLSKR) carry the 'KMSKS' region motif. Lys-274 lines the ATP pocket.

The protein belongs to the class-I aminoacyl-tRNA synthetase family. Glutamate--tRNA ligase type 1 subfamily. In terms of assembly, monomer.

The protein resides in the cytoplasm. The catalysed reaction is tRNA(Glu) + L-glutamate + ATP = L-glutamyl-tRNA(Glu) + AMP + diphosphate. Functionally, catalyzes the attachment of glutamate to tRNA(Glu) in a two-step reaction: glutamate is first activated by ATP to form Glu-AMP and then transferred to the acceptor end of tRNA(Glu). The chain is Glutamate--tRNA ligase from Arthrobacter sp. (strain FB24).